The following is an 823-amino-acid chain: Sphingomyelin phosphodiesterase 4 (823 aa).

Residues S130 and S245 each carry the phosphoserine modification. At T665 the chain carries Phosphothreonine. S749 is modified (phosphoserine). The chain crosses the membrane as a helical span at residues 776-796; it reads LLLLLMAFFVASLFCIGPLSC.

Requires Mg(2+) as cofactor. Expressed in skeletal muscle (at protein level). In terms of tissue distribution, expressed in skeletal muscle but a lower levels than isoform 1 (at protein level).

It is found in the endoplasmic reticulum membrane. The protein resides in the golgi apparatus membrane. It localises to the nucleus envelope. Its subcellular location is the cell membrane. The protein localises to the sarcolemma. It carries out the reaction a sphingomyelin + H2O = phosphocholine + an N-acylsphing-4-enine + H(+). Its activity is regulated as follows. Activated by phosphatidylserine and tumor necrosis factor (TNF). Inhibited by scyphostatin. Its function is as follows. Catalyzes the hydrolysis of membrane sphingomyelin to form phosphorylcholine and ceramide. It has a relevant role in the homeostasis of membrane sphingolipids, thereby influencing membrane integrity, and endoplasmic reticulum organization and function. May sensitize cells to DNA damage-induced apoptosis. In skeletal muscle, mediates TNF-stimulated oxidant production. In Mus musculus (Mouse), this protein is Sphingomyelin phosphodiesterase 4 (Smpd4).